A 112-amino-acid chain; its full sequence is PTS system lactose-specific EIIA component (112 aa).

The 99-residue stretch at 6–104 folds into the PTS EIIA type-3 domain; that stretch reads EEISMVGFAL…TRYMIRMFKR (99 aa). The active-site Tele-phosphohistidine intermediate is the His-80. A Phosphohistidine; by HPr modification is found at His-80. Asp-83 contacts Mg(2+).

As to quaternary structure, homotrimer. Requires Mg(2+) as cofactor.

Its subcellular location is the cytoplasm. The phosphoenolpyruvate-dependent sugar phosphotransferase system (sugar PTS), a major carbohydrate active transport system, catalyzes the phosphorylation of incoming sugar substrates concomitantly with their translocation across the cell membrane. The enzyme II LacEF PTS system is involved in lactose transport. The polypeptide is PTS system lactose-specific EIIA component (Lacticaseibacillus casei (Lactobacillus casei)).